The chain runs to 220 residues: Small ribosomal subunit protein uS3c (220 aa).

One can recognise a KH type-2 domain in the interval 48 to 119; that stretch reads VQKHTNNPFH…KLCLILIKID (72 aa).

The protein belongs to the universal ribosomal protein uS3 family. In terms of assembly, part of the 30S ribosomal subunit.

The protein localises to the plastid. Its subcellular location is the chloroplast. The sequence is that of Small ribosomal subunit protein uS3c (rps3) from Psilotum nudum (Whisk fern).